Here is a 133-residue protein sequence, read N- to C-terminus: IgW chain C region, secreted form 2 (133 aa).

The Ig-like domain occupies 1 to 71 (VISGFYPDSV…TGSRFNDRIS (71 aa)). N-linked (GlcNAc...) asparagine glycosylation is found at asparagine 32 and asparagine 112. The secretory tail stretch occupies residues 76–133 (KGGTVNLPVPGGNTPCTCPPSSCSGCMPKLVYQTDLNVTLENGGQLQYNCHQQACKIK).

In terms of tissue distribution, expressed mainly in lymphoid tissues including spleen, epigonal organ and circulating lymphocytes.

It is found in the secreted. The sequence is that of IgW chain C region, secreted form 2 from Heterodontus francisci (Horn shark).